A 426-amino-acid polypeptide reads, in one-letter code: RuvB-like protein 1 (426 aa).

Gly-62–Thr-69 contributes to the ATP binding site.

It belongs to the RuvB family. In terms of assembly, component of the SWR1 chromatin remodeling complex, the INO80 chromatin remodeling complex, and of the R2TP complex.

It localises to the nucleus. The catalysed reaction is ATP + H2O = ADP + phosphate + H(+). Functionally, DNA helicase which participates in several chromatin remodeling complexes, including the SWR1 and the INO80 complexes. The SWR1 complex mediates the ATP-dependent exchange of histone H2A for the H2A variant HZT1 leading to transcriptional regulation of selected genes by chromatin remodeling. The INO80 complex remodels chromatin by shifting nucleosomes and is involved in DNA repair. Also involved in pre-rRNA processing. This chain is RuvB-like protein 1 (RVB1), found in Encephalitozoon cuniculi (strain GB-M1) (Microsporidian parasite).